The primary structure comprises 154 residues: Myoglobin (154 aa).

The Globin domain maps to 2-148 (GLSDGEWQMV…FRNDIAAKYK (147 aa)). A phosphoserine mark is found at Ser-4 and Ser-32. His-65 serves as a coordination point for nitrite. His-65 serves as a coordination point for O2. Position 68 is a phosphothreonine (Thr-68). A heme b-binding site is contributed by His-94. Phosphoserine is present on residues Ser-121 and Ser-133.

The protein belongs to the globin family. Monomeric.

Its subcellular location is the cytoplasm. The protein resides in the sarcoplasm. It carries out the reaction Fe(III)-heme b-[protein] + nitric oxide + H2O = Fe(II)-heme b-[protein] + nitrite + 2 H(+). It catalyses the reaction H2O2 + AH2 = A + 2 H2O. Functionally, monomeric heme protein which primary function is to store oxygen and facilitate its diffusion within muscle tissues. Reversibly binds oxygen through a pentacoordinated heme iron and enables its timely and efficient release as needed during periods of heightened demand. Depending on the oxidative conditions of tissues and cells, and in addition to its ability to bind oxygen, it also has a nitrite reductase activity whereby it regulates the production of bioactive nitric oxide. Under stress conditions, like hypoxia and anoxia, it also protects cells against reactive oxygen species thanks to its pseudoperoxidase activity. The sequence is that of Myoglobin from Rattus norvegicus (Rat).